A 157-amino-acid polypeptide reads, in one-letter code: 3-dehydroquinate dehydratase (157 aa).

The active-site Proton acceptor is the tyrosine 24. Residues asparagine 75, histidine 81, and aspartate 88 each coordinate substrate. The Proton donor role is filled by histidine 101. Substrate contacts are provided by residues 102 to 103 and arginine 112; that span reads LS.

The protein belongs to the type-II 3-dehydroquinase family. In terms of assembly, homododecamer.

It catalyses the reaction 3-dehydroquinate = 3-dehydroshikimate + H2O. It functions in the pathway metabolic intermediate biosynthesis; chorismate biosynthesis; chorismate from D-erythrose 4-phosphate and phosphoenolpyruvate: step 3/7. Functionally, catalyzes a trans-dehydration via an enolate intermediate. This chain is 3-dehydroquinate dehydratase, found in Brucella abortus (strain S19).